We begin with the raw amino-acid sequence, 198 residues long: Protein GrpE (198 aa).

Positions 1–27 are enriched in basic and acidic residues; sequence MEERNEQVVEETKEAQTEEATIEKNSE. A disordered region spans residues 1–39; sequence MEERNEQVVEETKEAQTEEATIEKNSEESVTEEATEETV. The span at 29-39 shows a compositional bias: acidic residues; that stretch reads SVTEEATEETV.

This sequence belongs to the GrpE family. Homodimer.

Its subcellular location is the cytoplasm. In terms of biological role, participates actively in the response to hyperosmotic and heat shock by preventing the aggregation of stress-denatured proteins, in association with DnaK and GrpE. It is the nucleotide exchange factor for DnaK and may function as a thermosensor. Unfolded proteins bind initially to DnaJ; upon interaction with the DnaJ-bound protein, DnaK hydrolyzes its bound ATP, resulting in the formation of a stable complex. GrpE releases ADP from DnaK; ATP binding to DnaK triggers the release of the substrate protein, thus completing the reaction cycle. Several rounds of ATP-dependent interactions between DnaJ, DnaK and GrpE are required for fully efficient folding. This is Protein GrpE from Bacillus cytotoxicus (strain DSM 22905 / CIP 110041 / 391-98 / NVH 391-98).